The primary structure comprises 63 residues: Large ribosomal subunit protein uL30 (63 aa).

Belongs to the universal ribosomal protein uL30 family. In terms of assembly, part of the 50S ribosomal subunit.

The sequence is that of Large ribosomal subunit protein uL30 from Rickettsia peacockii (strain Rustic).